The chain runs to 256 residues: Small ribosomal subunit protein eS1 (256 aa).

A2 bears the N-acetylalanine; partial mark.

It belongs to the eukaryotic ribosomal protein eS1 family. Component of the small ribosomal subunit. Mature ribosomes consist of a small (40S) and a large (60S) subunit. The 40S subunit contains about 33 different proteins and 1 molecule of RNA (18S). The 60S subunit contains about 49 different proteins and 3 molecules of RNA (25S, 5.8S and 5S).

The protein localises to the cytoplasm. In Lentinula edodes (Shiitake mushroom), this protein is Small ribosomal subunit protein eS1.